The primary structure comprises 252 residues: Small ribosomal subunit protein uS3 (252 aa).

The 70-residue stretch at 16–85 (IDEYLETKLE…NPQVEVKEVD (70 aa)) folds into the KH type-2 domain. The disordered stretch occupies residues 233–252 (EESEIEEITEEIEDVETLEE).

It belongs to the universal ribosomal protein uS3 family. As to quaternary structure, part of the 30S ribosomal subunit.

Its function is as follows. Binds the lower part of the 30S subunit head. This is Small ribosomal subunit protein uS3 from Methanosphaera stadtmanae (strain ATCC 43021 / DSM 3091 / JCM 11832 / MCB-3).